Here is a 236-residue protein sequence, read N- to C-terminus: T-cell surface glycoprotein CD8 alpha chain (236 aa).

The first 26 residues, Met1–Gly26, serve as a signal peptide directing secretion. The 104-residue stretch at Gln27–Ser130 folds into the Ig-like V-type domain. Residues Gln27–Tyr189 are Extracellular-facing. Cys47 and Cys119 are disulfide-bonded. Asn63 is a glycosylation site (N-linked (GlcNAc...) asparagine). Thr144 is a glycosylation site (O-linked (GalNAc...) threonine; partial). Residues Thr148, Thr152, Thr158, and Thr160 are each glycosylated (O-linked (GalNAc...) threonine). Residues Ala150 to Arg170 form a disordered region. A helical transmembrane segment spans residues Ile190 to Ile210. A lipid anchor (S-palmitoyl cysteine) is attached at Cys211. Over Cys211–Val236 the chain is Cytoplasmic.

Forms disulfide-linked heterodimers with CD8B at the cell surface. Also forms homodimers in several cell types including NK-cells or peripheral blood T-lymphocytes. Interacts with the MHC class I HLA-A/B2M dimer. Interacts with LCK in a zinc-dependent manner. Palmitoylated, but association with CD8B seems to be more important for the enrichment of CD8A in lipid rafts. Post-translationally, O-glycosylated. In terms of processing, phosphorylated in cytotoxic T-lymphocytes (CTLs) following activation.

It localises to the cell membrane. Its function is as follows. Integral membrane glycoprotein that plays an essential role in the immune response and serves multiple functions in responses against both external and internal offenses. In T-cells, functions primarily as a coreceptor for MHC class I molecule:peptide complex. The antigens presented by class I peptides are derived from cytosolic proteins while class II derived from extracellular proteins. Interacts simultaneously with the T-cell receptor (TCR) and the MHC class I proteins presented by antigen presenting cells (APCs). In turn, recruits the Src kinase LCK to the vicinity of the TCR-CD3 complex. LCK then initiates different intracellular signaling pathways by phosphorylating various substrates ultimately leading to lymphokine production, motility, adhesion and activation of cytotoxic T-lymphocytes (CTLs). This mechanism enables CTLs to recognize and eliminate infected cells and tumor cells. In NK-cells, the presence of CD8A homodimers at the cell surface provides a survival mechanism allowing conjugation and lysis of multiple target cells. CD8A homodimer molecules also promote the survival and differentiation of activated lymphocytes into memory CD8 T-cells. The polypeptide is T-cell surface glycoprotein CD8 alpha chain (Cd8a) (Rattus norvegicus (Rat)).